Here is a 279-residue protein sequence, read N- to C-terminus: 3-methyl-2-oxobutanoate hydroxymethyltransferase (279 aa).

The Mg(2+) site is built by Asp43 and Asp82. 3-methyl-2-oxobutanoate-binding positions include 43–44 (DS), Asp82, and Lys112. Glu114 contacts Mg(2+). Residue Glu181 is the Proton acceptor of the active site.

It belongs to the PanB family. Homodecamer; pentamer of dimers. It depends on Mg(2+) as a cofactor.

The protein resides in the cytoplasm. The enzyme catalyses 3-methyl-2-oxobutanoate + (6R)-5,10-methylene-5,6,7,8-tetrahydrofolate + H2O = 2-dehydropantoate + (6S)-5,6,7,8-tetrahydrofolate. It participates in cofactor biosynthesis; (R)-pantothenate biosynthesis; (R)-pantoate from 3-methyl-2-oxobutanoate: step 1/2. Its function is as follows. Catalyzes the reversible reaction in which hydroxymethyl group from 5,10-methylenetetrahydrofolate is transferred onto alpha-ketoisovalerate to form ketopantoate. This chain is 3-methyl-2-oxobutanoate hydroxymethyltransferase, found in Halalkalibacterium halodurans (strain ATCC BAA-125 / DSM 18197 / FERM 7344 / JCM 9153 / C-125) (Bacillus halodurans).